A 330-amino-acid polypeptide reads, in one-letter code: Methionyl-tRNA formyltransferase (330 aa).

Residue 116 to 119 coordinates (6S)-5,6,7,8-tetrahydrofolate; that stretch reads SLLP.

The protein belongs to the Fmt family.

It catalyses the reaction L-methionyl-tRNA(fMet) + (6R)-10-formyltetrahydrofolate = N-formyl-L-methionyl-tRNA(fMet) + (6S)-5,6,7,8-tetrahydrofolate + H(+). Its function is as follows. Attaches a formyl group to the free amino group of methionyl-tRNA(fMet). The formyl group appears to play a dual role in the initiator identity of N-formylmethionyl-tRNA by promoting its recognition by IF2 and preventing the misappropriation of this tRNA by the elongation apparatus. The protein is Methionyl-tRNA formyltransferase of Nitratidesulfovibrio vulgaris (strain ATCC 29579 / DSM 644 / CCUG 34227 / NCIMB 8303 / VKM B-1760 / Hildenborough) (Desulfovibrio vulgaris).